A 576-amino-acid chain; its full sequence is MDAFATSPTSALIKAVNCIAHVTPMAGEDSSENRRASNYKPSSWDYEFLQSLATSHNTAQEKHMKMAEKLKEEVKSMIKGQMEPVAKLELINIVQRLGLKYRFESEIKEELLSLYKDGTDAWWVDNLHATALRFRLLRENGIFVPQDVFETFKDKSGKFKSQLCKDVRGLLSLYEASYLGWEGEDLLDEAKKFSTTNLNNVKESISSNTLGRLVKHALNLPLHWSAARYEARWFIDEYEKEENVNPNLLKYAKFDFNIVQSIHQRELGNLARWWVETGLDKLSFVRNTLMQNFMWGCAMVFEPQYGKVRDAAVKQASLIAMVDDVYDVYGSLEELEIFTDIVDRWDITGIDKLPRNISMILLTMFNTANQIGYDLLRDRGFNGIPHIAQAWATLCKKYLKEAKWYHSGYKPTLEEYLENGLVSISFVLSLVTAYLQTETLENLTYESAAYVNSVPPLVRYSGLLNRLYNDLGTSSAEIARGDTLKSIQCYMTQTGATEEAAREHIKGLVHEAWKGMNKCLFEQTPFAEPFVGFNVNTVRGSQFFYQHGDGYAVTESWTKDLSLSVLIHPIPLNEED.

The (2E)-geranyl diphosphate site is built by arginine 286, aspartate 323, aspartate 327, arginine 466, and asparagine 469. 2 residues coordinate Mg(2+): aspartate 323 and aspartate 327. Residues 323 to 327 (DDVYD) carry the DDXXD motif motif. Mg(2+) contacts are provided by asparagine 469, threonine 473, and glutamate 477.

The protein belongs to the terpene synthase family. Tpsb subfamily. The cofactor is Mg(2+). It depends on Mn(2+) as a cofactor.

The enzyme catalyses (2E,6E)-farnesyl diphosphate = beta-bisabolene + diphosphate. It carries out the reaction (2E)-geranyl diphosphate + H2O = (R)-alpha-terpineol + diphosphate. It catalyses the reaction (2E)-geranyl diphosphate = (4S)-limonene + diphosphate. It functions in the pathway secondary metabolite biosynthesis; terpenoid biosynthesis. Functionally, monoterpene synthase which catalyzes the conversion of (2E)-geranyl diphosphate (GPP) to (R)-alpha-terpineol and (4S)-limonene, as well as small quantities of linalool, myrcene, (-)-alpha-pinene, (+)-sabinene and geraniol. To a lower extent, catalyzes the conversion of (2E,6E)-farnesyl diphosphate (FPP) to beta-bisabolene. This Santalum album (White sandalwood) protein is (+)-alpha-terpineol synthase.